A 650-amino-acid chain; its full sequence is MRSGLCTPAEALEMPSSTEAATDECDDAELRCRVAVEELSPGGQPRKRQALRAAELSLGRNERRELMLRLQAPGPTGRPRCFPLRAVRLFTRFAATGRSTLRLPTDGVPGAGSVQLLLSDCPPERLRRFLRTLRLKLAVAPGPGPASARAQLLGPRPRDFVTISPVQPEELQRAAATKAPDSALEKRPMESQTSTEAPRWPLPVKKLRMPSTKPKLSEEQAAVLRMVLKGQSIFFTGSAGTGKSYLLKHILGSLPPTGTVATASTGVAACHIGGTTLHAFAGIGSGQAPLAQCMALANRPGVRQGWLNCQRLVIDEISMVEADFFDKLEAVARAVRQQKKPFGGIQLIICGDFLQLPPVTKGSQQPQFCFQAKSWRRCVPVILELTEVWRQADQTFISLLQAVRLGRCSDEVTRQLRATAAHKVGRDGIVATRLCTHQDDVALTNEKWLKALPGDVHSFEAIDSDPELSRTLDAQCPVSRVLQLKLGAQVMLVKNLAVSRGLVNGARGVVVGFESEGRGLPRVRFLCGITEVIRTDRWTVQVTGGQYLSRQQLPLQLAWAISIHKSQGMSLDCVEISLGRVFASGQAYVALSRARSLQGLRVLDFDPTVVRCDSRVLHFYATLRQGRGLSLESQDDEEANSDLENMDPNL.

Residues 14-192 (MPSSTEAATD…ALEKRPMESQ (179 aa)) are PINT. 2 positions are modified to phosphoserine: serine 40 and serine 164. The tract at residues 171–199 (LQRAAATKAPDSALEKRPMESQTSTEAPR) is disordered. ATP is bound at residue 237–244 (GSAGTGKS). The DNA-binding element occupies 586 to 605 (QAYVALSRARSLQGLRVLDF). The interval 631 to 650 (LESQDDEEANSDLENMDPNL) is disordered. The span at 633-650 (SQDDEEANSDLENMDPNL) shows a compositional bias: acidic residues.

It belongs to the helicase family. PIF1 subfamily. As to quaternary structure, monomer. Interacts with telomerase. It depends on Mg(2+) as a cofactor.

It localises to the nucleus. It is found in the mitochondrion. It catalyses the reaction Couples ATP hydrolysis with the unwinding of duplex DNA at the replication fork by translocating in the 5'-3' direction. This creates two antiparallel DNA single strands (ssDNA). The leading ssDNA polymer is the template for DNA polymerase III holoenzyme which synthesizes a continuous strand.. The catalysed reaction is ATP + H2O = ADP + phosphate + H(+). Its function is as follows. DNA-dependent ATPase and 5'-3' DNA helicase required for the maintenance of both mitochondrial and nuclear genome stability. Efficiently unwinds G-quadruplex (G4) DNA structures and forked RNA-DNA hybrids. Resolves G4 structures, preventing replication pausing and double-strand breaks (DSBs) at G4 motifs. Involved in the maintenance of telomeric DNA. Inhibits telomere elongation, de novo telomere formation and telomere addition to DSBs via catalytic inhibition of telomerase. Reduces the processivity of telomerase by displacing active telomerase from DNA ends. Releases telomerase by unwinding the short telomerase RNA/telomeric DNA hybrid that is the intermediate in the telomerase reaction. Possesses an intrinsic strand annealing activity. The protein is ATP-dependent DNA helicase PIF1 of Mus musculus (Mouse).